The sequence spans 508 residues: Glycerol kinase (508 aa).

Threonine 14 is a binding site for ADP. 3 residues coordinate ATP: threonine 14, threonine 15, and serine 16. Threonine 14 contributes to the sn-glycerol 3-phosphate binding site. Arginine 18 serves as a coordination point for ADP. Sn-glycerol 3-phosphate is bound by residues arginine 84, glutamate 85, and tyrosine 136. Glycerol is bound by residues arginine 84, glutamate 85, and tyrosine 136. Position 232 is a phosphohistidine; by HPr (histidine 232). Aspartate 246 contacts sn-glycerol 3-phosphate. Positions 246 and 247 each coordinate glycerol. ADP is bound by residues threonine 268 and glycine 311. Positions 268, 311, 315, and 412 each coordinate ATP. Positions 412 and 416 each coordinate ADP.

Belongs to the FGGY kinase family. Homotetramer and homodimer (in equilibrium). Post-translationally, the phosphoenolpyruvate-dependent sugar phosphotransferase system (PTS), including enzyme I, and histidine-containing protein (HPr) are required for the phosphorylation, which leads to the activation of the enzyme.

The catalysed reaction is glycerol + ATP = sn-glycerol 3-phosphate + ADP + H(+). The protein operates within polyol metabolism; glycerol degradation via glycerol kinase pathway; sn-glycerol 3-phosphate from glycerol: step 1/1. With respect to regulation, activated by phosphorylation and inhibited by fructose 1,6-bisphosphate (FBP). In terms of biological role, key enzyme in the regulation of glycerol uptake and metabolism. Catalyzes the phosphorylation of glycerol to yield sn-glycerol 3-phosphate. In Streptococcus pyogenes serotype M12 (strain MGAS2096), this protein is Glycerol kinase.